An 815-amino-acid chain; its full sequence is Plakophilin-2 (815 aa).

Over residues 1 to 12 the composition is skewed to basic and acidic residues; that stretch reads MLKPHPEHKEQP. Disordered stretches follow at residues 1-31 and 76-105; these read MLKP…MAEE and QLTL…ISSS. Residues 13 to 25 are compositionally biased toward polar residues; the sequence is QDSFTPSGDSTPD. Residues 91–105 show a composition bias toward low complexity; it reads SSLAESQSSCQISSS. ARM repeat units lie at residues 317-357, 360-399, 402-442, 457-498, 501-547, 604-644, 652-691, 693-737, and 740-783; these read KGKP…NQCF, PDAK…NIVF, NENK…NLSS, PLTD…NLSS, PDGR…NLSY, PHGV…NLTA, AIAH…NISR, RELH…NLSQ, and ASNT…TLWR.

It belongs to the beta-catenin family.

It is found in the nucleus. The protein localises to the cell junction. It localises to the desmosome. Its subcellular location is the cytoplasm. Its function is as follows. Required for development of the heart, potentially via cell-cell adhesion and modulation of expression of cardiac precursor genes. Plays a role in desmosome cell-cell junctions and their intracellular connectivity. The sequence is that of Plakophilin-2 from Danio rerio (Zebrafish).